A 303-amino-acid chain; its full sequence is Vesicle-trafficking protein SEC22c (303 aa).

The Cytoplasmic segment spans residues 1–183 (MSVIFFACVV…EPAPNFRMEP (183 aa)). Residues 8–119 (CVVRVRDGLP…YAFLEFDSII (112 aa)) form the Longin domain. A helical transmembrane segment spans residues 184–204 (VTALGILSLILNIMCAALNLI). Over 205–223 (RGVHLAEHSLQVAHEEIGN) the chain is Lumenal. Residues 224–244 (ILAFLVPFVACIFQCYLYLFY) traverse the membrane as a helical segment. Topologically, residues 245–248 (SPAR) are cytoplasmic. A helical membrane pass occupies residues 249–269 (TMKVVLMLLFICLGNMYLHGL). Arg-270 is a topological domain (lumenal). The chain crosses the membrane as a helical span at residues 271–291 (NLWQILFHIGVAFLSSYQILT). Residues 292–303 (RQLQEKQSDCGV) are Cytoplasmic-facing.

Belongs to the synaptobrevin family. In terms of tissue distribution, ubiquitously expressed.

It is found in the endoplasmic reticulum membrane. In terms of biological role, may be involved in vesicle transport between the ER and the Golgi complex. This Homo sapiens (Human) protein is Vesicle-trafficking protein SEC22c (SEC22C).